The primary structure comprises 339 residues: Biotin synthase (339 aa).

Residues 55-282 (NAVQLSTLLS…KAVVRLSAGR (228 aa)) enclose the Radical SAM core domain. The [4Fe-4S] cluster site is built by C70, C74, and C77. [2Fe-2S] cluster is bound by residues C114, C145, C205, and R277.

It belongs to the radical SAM superfamily. Biotin synthase family. As to quaternary structure, homodimer. The cofactor is [4Fe-4S] cluster. Requires [2Fe-2S] cluster as cofactor.

It catalyses the reaction (4R,5S)-dethiobiotin + (sulfur carrier)-SH + 2 reduced [2Fe-2S]-[ferredoxin] + 2 S-adenosyl-L-methionine = (sulfur carrier)-H + biotin + 2 5'-deoxyadenosine + 2 L-methionine + 2 oxidized [2Fe-2S]-[ferredoxin]. It participates in cofactor biosynthesis; biotin biosynthesis; biotin from 7,8-diaminononanoate: step 2/2. In terms of biological role, catalyzes the conversion of dethiobiotin (DTB) to biotin by the insertion of a sulfur atom into dethiobiotin via a radical-based mechanism. The protein is Biotin synthase of Burkholderia ambifaria (strain ATCC BAA-244 / DSM 16087 / CCUG 44356 / LMG 19182 / AMMD) (Burkholderia cepacia (strain AMMD)).